Reading from the N-terminus, the 253-residue chain is uncharacterized protein (253 aa).

The signal sequence occupies residues 1 to 16 (MCVVYRTSVLILLASG). A lipid anchor (N-palmitoyl cysteine) is attached at Cys-17. Residue Cys-17 is the site of S-diacylglycerol cysteine attachment.

Belongs to the staphylococcal tandem lipoprotein family.

Its subcellular location is the cell membrane. This is an uncharacterized protein from Staphylococcus aureus (strain N315).